The following is a 306-amino-acid chain: MPFLELTLRCTEATQPRYENALEDVGALAVTLLDAEADTSNEQAILEPGVGETPLWDTLVLSALFPADSNALLLLAALEAFDPELDWSSGSFRAVEDEDWERAWLDQFQPMAFGSRTWIVPWNHELPEAAQAADAAVVRLDPGLAFGSGTHPTTALCLRWLDQLAVDGLLQGQRVLDFGCGSGILALAALKLGAAEAIGVDNDPQALVATADNAERNGEQARMHVYLPPDEPVATYPIVVANILASALDALAELLAARVAAGGRIALSGILHGQEGELLQRYAEWFDDLQATQDGDWMRITGVRRA.

S-adenosyl-L-methionine contacts are provided by Thr-154, Gly-179, Asp-201, and Asn-242.

The protein belongs to the methyltransferase superfamily. PrmA family.

The protein resides in the cytoplasm. It carries out the reaction L-lysyl-[protein] + 3 S-adenosyl-L-methionine = N(6),N(6),N(6)-trimethyl-L-lysyl-[protein] + 3 S-adenosyl-L-homocysteine + 3 H(+). Its function is as follows. Methylates ribosomal protein L11. The chain is Ribosomal protein L11 methyltransferase from Stenotrophomonas maltophilia (strain K279a).